The sequence spans 292 residues: Phosphatidylglycerol--prolipoprotein diacylglyceryl transferase (292 aa).

3 helical membrane-spanning segments follow: residues 18-38, 67-87, and 105-125; these read LFGV…GLLI, LLTW…VLFY, and GGMS…AFCL. Arginine 150 lines the a 1,2-diacyl-sn-glycero-3-phospho-(1'-sn-glycerol) pocket. 3 helical membrane-spanning segments follow: residues 193 to 213, 222 to 242, and 266 to 286; these read QIYE…LLVW, GSVS…VEFV, and GLTM…YLIL.

This sequence belongs to the Lgt family.

It localises to the cell inner membrane. The catalysed reaction is L-cysteinyl-[prolipoprotein] + a 1,2-diacyl-sn-glycero-3-phospho-(1'-sn-glycerol) = an S-1,2-diacyl-sn-glyceryl-L-cysteinyl-[prolipoprotein] + sn-glycerol 1-phosphate + H(+). It participates in protein modification; lipoprotein biosynthesis (diacylglyceryl transfer). Catalyzes the transfer of the diacylglyceryl group from phosphatidylglycerol to the sulfhydryl group of the N-terminal cysteine of a prolipoprotein, the first step in the formation of mature lipoproteins. The polypeptide is Phosphatidylglycerol--prolipoprotein diacylglyceryl transferase (Cereibacter sphaeroides (strain ATCC 17029 / ATH 2.4.9) (Rhodobacter sphaeroides)).